A 404-amino-acid polypeptide reads, in one-letter code: Coenzyme F(430) synthetase (404 aa).

112–117 contacts ATP; that stretch reads GVKGKT.

This sequence belongs to the MurCDEF family.

It catalyses the reaction 15,17(3)-seco-F430-17(3)-acid + ATP = coenzyme F430 + ADP + phosphate. Its function is as follows. Involved in the biosynthesis of the unique nickel-containing tetrapyrrole coenzyme F430, the prosthetic group of methyl-coenzyme M reductase (MCR), which plays a key role in methanogenesis and anaerobic methane oxidation. Catalyzes the activation the g-propionate side chain of 15,17(3)-seco-F430-17(3)-acid (seco-F430) for intramolecular C-C bond formation to yield the carbocyclic F ring of coenzyme F430. This is Coenzyme F(430) synthetase from Methanocaldococcus jannaschii (strain ATCC 43067 / DSM 2661 / JAL-1 / JCM 10045 / NBRC 100440) (Methanococcus jannaschii).